Here is a 395-residue protein sequence, read N- to C-terminus: G-protein coupled receptor 182 (395 aa).

Residues 1-53 (MSVIPSPRPVSTLEPDNDFRDIHNWTELLHLFNQTFTDCHIEFNENTKHVVLF) are Extracellular-facing. N-linked (GlcNAc...) asparagine glycans are attached at residues Asn-24 and Asn-33. The helical transmembrane segment at 54–75 (VFYLAIFVVGLVENVLVICVNC) threads the bilayer. The Cytoplasmic portion of the chain corresponds to 76–86 (RRSGRVGMLNL). Residues 87–109 (YILNMAIADLGIILSLPVWMLEV) form a helical membrane-spanning segment. The Extracellular segment spans residues 110 to 123 (MLEYTWLWGSFSCR). Residues Cys-122 and Cys-198 are joined by a disulfide bond. Residues 124–145 (FIHYFYLVNMYSSIFFLTCLSI) traverse the membrane as a helical segment. The Cytoplasmic segment spans residues 146 to 166 (DRYVTLTNTSPSWQRHQHRIR). A helical transmembrane segment spans residues 167–189 (RAVCAGVWVLSAIIPLPEVVHIQ). Over 190-213 (LLDGSEPMCLFLAPFETYSAWALA) the chain is Extracellular. Residues 214-235 (VALSATILGFLLPFLLIAVFNI) form a helical membrane-spanning segment. Residues 236-254 (LTACRLRRQRQTESRRHCL) are Cytoplasmic-facing. The chain crosses the membrane as a helical span at residues 255–276 (LMWAYIVVFAICWLPYQVTMLL). Residues 277-295 (LTLHGTHIFLHCHLVNLLY) lie on the Extracellular side of the membrane. A helical transmembrane segment spans residues 296–316 (FFYEIIDCFSMLHCVANPILY). Residues 317 to 395 (NFLSPSFRGR…QTPHLHSAIL (79 aa)) lie on the Cytoplasmic side of the membrane. Residue Ser-329 is modified to Phosphoserine.

It belongs to the G-protein coupled receptor 1 family. In terms of tissue distribution, expressed in liver and lung.

Its subcellular location is the cell membrane. Its function is as follows. Orphan receptor. The chain is G-protein coupled receptor 182 (Gpr182) from Mus musculus (Mouse).